The following is a 373-amino-acid chain: Chaperone protein DnaJ (373 aa).

The J domain occupies 4-68 (NYYQILGVSK…QKRAAYDRLG (65 aa)). The CR-type zinc finger occupies 136–214 (GIEKNINFSS…CHGMGRYHKQ (79 aa)). 8 residues coordinate Zn(2+): Cys-149, Cys-152, Cys-166, Cys-169, Cys-188, Cys-191, Cys-202, and Cys-205. CXXCXGXG motif repeat units follow at residues 149-156 (CDTCHGSG), 166-173 (CDACSGVG), 188-195 (CHKCQGNG), and 202-209 (CKKCHGMG).

The protein belongs to the DnaJ family. Homodimer. Zn(2+) serves as cofactor.

It localises to the cytoplasm. In terms of biological role, participates actively in the response to hyperosmotic and heat shock by preventing the aggregation of stress-denatured proteins and by disaggregating proteins, also in an autonomous, DnaK-independent fashion. Unfolded proteins bind initially to DnaJ; upon interaction with the DnaJ-bound protein, DnaK hydrolyzes its bound ATP, resulting in the formation of a stable complex. GrpE releases ADP from DnaK; ATP binding to DnaK triggers the release of the substrate protein, thus completing the reaction cycle. Several rounds of ATP-dependent interactions between DnaJ, DnaK and GrpE are required for fully efficient folding. Also involved, together with DnaK and GrpE, in the DNA replication of plasmids through activation of initiation proteins. In Rickettsia rickettsii (strain Iowa), this protein is Chaperone protein DnaJ.